Here is a 524-residue protein sequence, read N- to C-terminus: Serine/threonine-protein kinase PAK 2 (524 aa).

The interval 1-81 (MSDNGELEDK…PEISPPSDFE (81 aa)) is disordered. Ser-2 carries the N-acetylserine modification. Ser-2, Ser-20, Ser-55, and Ser-58 each carry phosphoserine. At Thr-60 the chain carries Phosphothreonine. Lys-62 carries the post-translational modification N6-acetyllysine. Position 64 is a phosphoserine (Ser-64). A compositionally biased stretch (basic and acidic residues) spans 67–81 (KEKERPEISPPSDFE). The GTPase-binding stretch occupies residues 69–112 (KERPEISPPSDFEHTIHVGFDAVTGEFTGMPEQWARLLQTSNIT). The tract at residues 69-137 (KERPEISPPS…KFYDSNTVKQ (69 aa)) is autoregulatory region. In terms of domain architecture, CRIB spans 74–87 (ISPPSDFEHTIHVG). The interval 88–248 (FDAVTGEFTG…IVSIGDPKKK (161 aa)) is linker. N6-acetyllysine is present on Lys-128. Phosphothreonine is present on Thr-134. Tyr-139 bears the Phosphotyrosine mark. A Phosphoserine modification is found at Ser-141. Thr-143 carries the phosphothreonine modification. Phosphoserine is present on Ser-152. 2 positions are modified to phosphothreonine: Thr-159 and Thr-169. A compositionally biased stretch (acidic residues) spans 169–178 (TEEDDDDEEA). A disordered region spans residues 169–188 (TEEDDDDEEAAPPVIAPRPD). Ser-197 is subject to Phosphoserine. The segment at 204 to 228 (APVGDSHVDSGAKSSDKQKKKTKMT) is disordered. Residues 209–228 (SHVDSGAKSSDKQKKKTKMT) show a composition bias toward basic and acidic residues. Positions 245–251 (PKKKYTR) match the Nuclear localization signal motif. In terms of domain architecture, Protein kinase spans 249 to 500 (YTRYEKIGQG…AKELLQHPFL (252 aa)). Residues 255 to 263 (IGQGASGTV) and Lys-278 each bind ATP. Residue Asp-368 is the Proton acceptor of the active site. Residue Thr-402 is modified to Phosphothreonine; by autocatalysis.

In terms of assembly, interacts tightly with GTP-bound but not GDP-bound CDC42/p21 and RAC1. Interacts with SH3MD4. Interacts with SCRIB. Interacts with ARHGEF7 and GIT1. PAK-2p34 interacts with ARHGAP10. Interacts with RAC1. In terms of processing, full-length PAK2 is autophosphorylated when activated by CDC42/p21. Following cleavage, both peptides, PAK-2p27 and PAK-2p34, become highly autophosphorylated. Autophosphorylation of PAK-2p27 can occur in the absence of any effectors and is dependent on phosphorylation of Thr-402, because PAK-2p27 is acting as an exogenous substrate. During apoptosis proteolytically cleaved by caspase-3 or caspase-3-like proteases to yield active PAK-2p34. Post-translationally, ubiquitinated, leading to its proteasomal degradation.

Its subcellular location is the cytoplasm. The protein resides in the nucleus. It is found in the perinuclear region. It localises to the membrane. The enzyme catalyses L-seryl-[protein] + ATP = O-phospho-L-seryl-[protein] + ADP + H(+). The catalysed reaction is L-threonyl-[protein] + ATP = O-phospho-L-threonyl-[protein] + ADP + H(+). Its activity is regulated as follows. Activated by binding small G proteins. Binding of GTP-bound CDC42 or RAC1 to the autoregulatory region releases monomers from the autoinhibited dimer, enables phosphorylation of Thr-402 and allows the kinase domain to adopt an active structure. Following caspase cleavage, autophosphorylated PAK-2p34 is constitutively active. Functionally, serine/threonine protein kinase that plays a role in a variety of different signaling pathways including cytoskeleton regulation, cell motility, cell cycle progression, apoptosis or proliferation. Acts as a downstream effector of the small GTPases CDC42 and RAC1. Activation by the binding of active CDC42 and RAC1 results in a conformational change and a subsequent autophosphorylation on several serine and/or threonine residues. Full-length PAK2 stimulates cell survival and cell growth. Phosphorylates MAPK4 and MAPK6 and activates the downstream target MAPKAPK5, a regulator of F-actin polymerization and cell migration. Phosphorylates JUN and plays an important role in EGF-induced cell proliferation. Phosphorylates many other substrates including histone H4 to promote assembly of H3.3 and H4 into nucleosomes, BAD, ribosomal protein S6, or MBP. Phosphorylates CASP7, thereby preventing its activity. Additionally, associates with ARHGEF7 and GIT1 to perform kinase-independent functions such as spindle orientation control during mitosis. On the other hand, apoptotic stimuli such as DNA damage lead to caspase-mediated cleavage of PAK2, generating PAK-2p34, an active p34 fragment that translocates to the nucleus and promotes cellular apoptosis involving the JNK signaling pathway. Caspase-activated PAK2 phosphorylates MKNK1 and reduces cellular translation. The sequence is that of Serine/threonine-protein kinase PAK 2 (PAK2) from Oryctolagus cuniculus (Rabbit).